Reading from the N-terminus, the 55-residue chain is Large ribosomal subunit protein bL33 (55 aa).

The protein belongs to the bacterial ribosomal protein bL33 family.

The chain is Large ribosomal subunit protein bL33 (rpmG) from Buchnera aphidicola subsp. Acyrthosiphon pisum (strain APS) (Acyrthosiphon pisum symbiotic bacterium).